Reading from the N-terminus, the 376-residue chain is Putative F-box/FBD/LRR-repeat protein At5g52460 (376 aa).

In terms of domain architecture, F-box spans 16 to 75 (RDEISSLPDDLLIQILLLVPIKDAVGTMILSKRWRYVWTLLPKLEYSDPGDECESVWKFL). LRR repeat units follow at residues 131–154 (CKTLVELTLSDKIIVDVPSSVCLP) and 199–224 (FAKVHKLRLEKPHIDVVCHTDDKFLK). Positions 296–348 (CHGTNQGTVPRCLSAHLDEEFVWHGYRGNEEETQLIRYIFANAKCLKKREIST) constitute an FBD domain.

This chain is Putative F-box/FBD/LRR-repeat protein At5g52460 (EDA41), found in Arabidopsis thaliana (Mouse-ear cress).